Here is a 231-residue protein sequence, read N- to C-terminus: 6-hydroxymethyl-7,8-dihydropterin pyrophosphokinase (231 aa).

It belongs to the archaeal 6-HMPDK family. Mg(2+) is required as a cofactor.

The enzyme catalyses 6-hydroxymethyl-7,8-dihydropterin + ATP = (7,8-dihydropterin-6-yl)methyl diphosphate + AMP + H(+). In terms of biological role, catalyzes the transfer of diphosphate from ATP to 6-hydroxymethyl-7,8-dihydropterin (6-HMD), leading to 6-hydroxymethyl-7,8-dihydropterin diphosphate (6-HMDP). To a lesser extent, can also use CTP, UTP, and GTP as the nucleotide triphosphate substrate. The polypeptide is 6-hydroxymethyl-7,8-dihydropterin pyrophosphokinase (Pyrococcus furiosus (strain ATCC 43587 / DSM 3638 / JCM 8422 / Vc1)).